A 270-amino-acid chain; its full sequence is Putative phosphoenolpyruvate synthase regulatory protein (270 aa).

150-157 serves as a coordination point for ADP; that stretch reads GVSRCGKT.

This sequence belongs to the pyruvate, phosphate/water dikinase regulatory protein family. PSRP subfamily.

The catalysed reaction is [pyruvate, water dikinase] + ADP = [pyruvate, water dikinase]-phosphate + AMP + H(+). The enzyme catalyses [pyruvate, water dikinase]-phosphate + phosphate + H(+) = [pyruvate, water dikinase] + diphosphate. Its function is as follows. Bifunctional serine/threonine kinase and phosphorylase involved in the regulation of the phosphoenolpyruvate synthase (PEPS) by catalyzing its phosphorylation/dephosphorylation. This chain is Putative phosphoenolpyruvate synthase regulatory protein, found in Shewanella sediminis (strain HAW-EB3).